A 416-amino-acid chain; its full sequence is D-amino acid dehydrogenase 2 (416 aa).

5-19 (VCIIGAGVVGLATAY) is an FAD binding site.

It belongs to the DadA oxidoreductase family. It depends on FAD as a cofactor.

It catalyses the reaction a D-alpha-amino acid + A + H2O = a 2-oxocarboxylate + AH2 + NH4(+). In terms of biological role, oxidative deamination of D-amino acids. The chain is D-amino acid dehydrogenase 2 (dadA2) from Pseudomonas aeruginosa (strain ATCC 15692 / DSM 22644 / CIP 104116 / JCM 14847 / LMG 12228 / 1C / PRS 101 / PAO1).